A 422-amino-acid polypeptide reads, in one-letter code: Phagosome assembly factor 1 (422 aa).

This sequence belongs to the PHAF1 family. In terms of assembly, interacts with BCAS3; the interaction is requrired for the association with the phagophore.

The protein resides in the cytoplasm. Its subcellular location is the preautophagosomal structure. Its function is as follows. Plays a regulatory role in autophagic activity. In complex with BCAS3, associates with the autophagosome formation site during both non-selective and selective autophagy. The polypeptide is Phagosome assembly factor 1 (Mus musculus (Mouse)).